A 506-amino-acid chain; its full sequence is Cytochrome P450 monooxygenase atr2 (506 aa).

A helical transmembrane segment spans residues 18 to 38 (VFAGLVLASLLTTTYCIWNIF). Position 451 (Cys451) interacts with heme.

The protein belongs to the cytochrome P450 family. The cofactor is heme.

The protein localises to the membrane. The enzyme catalyses 4-O-demethylbarbatate + reduced [NADPH--hemoprotein reductase] + O2 = proatranorin II + oxidized [NADPH--hemoprotein reductase] + H2O + H(+). The catalysed reaction is proatranorin II + reduced [NADPH--hemoprotein reductase] + O2 = proatranorin III + oxidized [NADPH--hemoprotein reductase] + 2 H2O + H(+). It catalyses the reaction proatranorin I + reduced [NADPH--hemoprotein reductase] + O2 = proatranorin IV + oxidized [NADPH--hemoprotein reductase] + H2O + H(+). It carries out the reaction proatranorin IV + reduced [NADPH--hemoprotein reductase] + O2 = atranorin + oxidized [NADPH--hemoprotein reductase] + 2 H2O + H(+). It participates in secondary metabolite biosynthesis; terpenoid biosynthesis. In terms of biological role, cytochrome P450 monooxygenase; part of the gene cluster that mediates the biosynthesis of atranorin, a depside of polyketide origin that accumulates in the cortical or medullary layers of lichen thalli. Atr2 performs the oxidation at the C-9 position of 4-O-demethylbarbatic acid to yield proatranorin III via proatranorin II. Atr2 is also able to oxidize the atr3 product proatranorin I to produce the final compound atranorin. The first step in the pathway is performed by the non-reducing polyketide synthase atr1 that produces 4-O-demethylbarbatic acid composed of two 3-methylorsellinic acid (3MOA) moieties. The pathway continues with the actions of the cytochrome P450 monooygenase atr2 that catalizes the oxidation of c-9 and the O-methyltransferase atr3 that performs the methylation of the carboxyl group to yield atranorin, via the proatranorin II and III intermediates if atr2 acts first, or the proatranorin I intermediate if atr3 acts first. The chain is Cytochrome P450 monooxygenase atr2 from Stereocaulon alpinum (Alpine snow lichen).